A 720-amino-acid chain; its full sequence is GTPase-activating protein gyp2 (720 aa).

Residues 20-85 (LDPASFFRIN…AAVRKLEREN (66 aa)) enclose the GRAM domain. Residues 216–404 (GIPNNLRADI…RILDCLFVNG (189 aa)) form the Rab-GAP TBC domain.

The protein localises to the cytoplasm. It is found in the nucleus. Its function is as follows. Stimulates specifically the GTPase activity of ypt2 and ryh1. Inactivates ryh1 during recycling between the endosome and the Golgi compartments. The polypeptide is GTPase-activating protein gyp2 (Schizosaccharomyces pombe (strain 972 / ATCC 24843) (Fission yeast)).